The chain runs to 530 residues: Probable phosphoacetylglucosamine mutase (530 aa).

Ser62 (phosphoserine intermediate) is an active-site residue. Residues Ser62, Asp278, Asp280, and Asp282 each contribute to the Mg(2+) site. Substrate is bound by residues 369–371, 481–485, and Arg490; these read EPN and RPSGT.

The protein belongs to the phosphohexose mutase family. Mg(2+) serves as cofactor.

The enzyme catalyses N-acetyl-alpha-D-glucosamine 1-phosphate = N-acetyl-D-glucosamine 6-phosphate. Its pathway is nucleotide-sugar biosynthesis; UDP-N-acetyl-alpha-D-glucosamine biosynthesis; N-acetyl-alpha-D-glucosamine 1-phosphate from alpha-D-glucosamine 6-phosphate (route I): step 2/2. Its function is as follows. Catalyzes the conversion of GlcNAc-6-P into GlcNAc-1-P during the synthesis of uridine diphosphate/UDP-GlcNAc, which is a biosynthetic precursor of chitin and also supplies the amino sugars for N-linked oligosaccharides of glycoproteins. This is Probable phosphoacetylglucosamine mutase from Encephalitozoon cuniculi (strain GB-M1) (Microsporidian parasite).